A 338-amino-acid chain; its full sequence is Calcium uniporter protein 4, mitochondrial (338 aa).

A mitochondrion-targeting transit peptide spans 1-36; sequence MVMMKKLLSNRLFNMSKTASQSLMNCRTSSSSSLAM. Residues 233–253 traverse the membrane as a helical segment; sequence LWAGLGYLIIQTAGFMRLTFW. Positions 257-265 match the Selectivity filter motif; the sequence is WDVMEPICF. Ca(2+) is bound at residue glutamate 261. The chain crosses the membrane as a helical span at residues 263-280; it reads ICFYVSSVYFMAGYTFFL.

This sequence belongs to the MCU (TC 1.A.77) family.

Its subcellular location is the mitochondrion inner membrane. The enzyme catalyses Ca(2+)(in) = Ca(2+)(out). In terms of biological role, mitochondrial inner membrane calcium uniporter that mediates calcium uptake into mitochondria. Constitutes a pore-forming and calcium-conducting subunit. Mitochondrial calcium homeostasis plays key roles in cellular physiology and regulates cell bioenergetics, cytoplasmic calcium signals and activation of cell death pathways. This Arabidopsis thaliana (Mouse-ear cress) protein is Calcium uniporter protein 4, mitochondrial.